A 309-amino-acid polypeptide reads, in one-letter code: Probable sugar phosphate/phosphate translocator At5g05820 (309 aa).

10 consecutive transmembrane segments (helical) span residues 9–29 (FFTIGLVASWYSSNIGVLLLN), 42–62 (IFLTMCHMTACSLLSYVAIAW), 77–97 (FFKIAALSLVFCVSVVFGNIS), 100–120 (FLPVSFNQAIGATTPFFTAVF), 130–150 (AWLTYFTLVPVVTGVVIASGG), 154–174 (FHLFGFLMCIAATAARALKSV), 192–212 (LLLYMAPIAVVLLLPATLIME), 229–249 (IVWYLLFNSALAYLVNLTNFL), 256–278 (ALTLQVLGNAKGAVAVVVSILIF), and 282–301 (VSVTGMLGYSLTVCGVILYS). Residues 30-147 (KYLLSNYGFK…VPVVTGVVIA (118 aa)) form the EamA domain.

This sequence belongs to the TPT transporter family. TPT (TC 2.A.7.9) subfamily.

It localises to the membrane. This Arabidopsis thaliana (Mouse-ear cress) protein is Probable sugar phosphate/phosphate translocator At5g05820.